The following is a 306-amino-acid chain: Probable rRNA-processing protein EBP2 (306 aa).

Residue Met1 is modified to N-acetylmethionine. 2 disordered regions span residues 1 to 20 and 77 to 99; these read MDTP…LVTD and VPEI…VDPE. The residue at position 3 (Thr3) is a Phosphothreonine. A phosphoserine mark is found at Ser7, Ser9, Ser11, Ser13, and Ser16. Residue Lys94 forms a Glycyl lysine isopeptide (Lys-Gly) (interchain with G-Cter in SUMO2) linkage. A coiled-coil region spans residues 138 to 169; the sequence is AEMAKSDLQMQKIRQKLQTKQAAMERSEKAKQ. Residues Lys179 and Lys218 each participate in a glycyl lysine isopeptide (Lys-Gly) (interchain with G-Cter in SUMO2) cross-link. A disordered region spans residues 213-306; the sequence is LEGDQKPLAQ…TREKMKNRTH (94 aa). 2 positions are modified to phosphoserine: Ser264 and Ser270. A compositionally biased stretch (basic residues) spans 274–306; sequence KTAHGRGLKRPGKKGSNKRPGKRTREKMKNRTH.

This sequence belongs to the EBP2 family. In terms of assembly, specifically interacts with EBV EBNA1. The EBNA1-EBP2 interaction is important for the stable segregation of EBV episomes during cell division. Interacts with WDR46. Ubiquitous.

The protein resides in the nucleus. Its subcellular location is the nucleolus. Functionally, required for the processing of the 27S pre-rRNA. This Homo sapiens (Human) protein is Probable rRNA-processing protein EBP2 (EBNA1BP2).